Consider the following 350-residue polypeptide: Homoserine O-succinyltransferase (350 aa).

Residue Cys146 is the Acyl-thioester intermediate of the active site. Positions 167 and 196 each coordinate substrate. His239 serves as the catalytic Proton acceptor. Residue Glu241 is part of the active site. A substrate-binding site is contributed by Arg253.

The protein belongs to the MetA family.

It is found in the cytoplasm. It catalyses the reaction L-homoserine + succinyl-CoA = O-succinyl-L-homoserine + CoA. The protein operates within amino-acid biosynthesis; L-methionine biosynthesis via de novo pathway; O-succinyl-L-homoserine from L-homoserine: step 1/1. Transfers a succinyl group from succinyl-CoA to L-homoserine, forming succinyl-L-homoserine. The protein is Homoserine O-succinyltransferase of Cardiobacterium hominis (strain ATCC 15826 / DSM 8339 / NCTC 10426 / 6573).